Consider the following 385-residue polypeptide: Isocitrate dehydrogenase [NAD] subunit beta, mitochondrial (385 aa).

The N-terminal 34 residues, 1-34 (MAALSGVRWLTRALVSAGNPGAWRGLSTSAAAHA), are a transit peptide targeting the mitochondrion. Lys-199 is modified (N6-acetyllysine).

This sequence belongs to the isocitrate and isopropylmalate dehydrogenases family. Heterooligomer of subunits alpha (IDH3A), beta (IDH3B), and gamma (IDH3G) in the apparent ratio of 2:1:1. The heterodimer containing one IDH3A and one IDH3B subunit and the heterodimer containing one IDH3A and one IDH3G subunit assemble into a heterotetramer (which contains two subunits of IDH3A, one of IDH3B and one of IDH3G) and further into the heterooctamer.

It localises to the mitochondrion. With respect to regulation, the heterotetramer and the heterodimer composed of IDH3A and IDH3G subunits can be allosterically activated by citrate (CIT) or/and ADP, and the two activators can act independently or synergistically. The heterodimer composed of IDH3A and IDH3B subunits cannot be allosterically regulated and the allosteric regulation of the heterotetramer is through the IDH3G subunit and not the IDH3B subunit. The IDH3G subunit contains the allosteric site which consists of a CIT-binding site and an ADP-binding site, and the binding of CIT and ADP causes conformational changes at the allosteric site which are transmitted to the active site in the catalytic subunit (IDH3A) through a cascade of conformational changes at the heterodimer interface, leading to stabilization of the isocitrate-binding at the active site and thus activation of the enzyme. ATP can activate the heterotetramer and the heterodimer composed of IDH3A and IDH3G subunits at low concentrations but inhibits their activities at high concentrations, whereas ATP exhibits only inhibitory effect on the heterodimer composed of IDH3A and IDH3B subunits. Plays a structural role to facilitate the assembly and ensure the full activity of the enzyme catalyzing the decarboxylation of isocitrate (ICT) into alpha-ketoglutarate. The heterodimer composed of the alpha (IDH3A) and beta (IDH3B) subunits and the heterodimer composed of the alpha (IDH3A) and gamma (IDH3G) subunits, have considerable basal activity but the full activity of the heterotetramer (containing two subunits of IDH3A, one of IDH3B and one of IDH3G) requires the assembly and cooperative function of both heterodimers. This is Isocitrate dehydrogenase [NAD] subunit beta, mitochondrial (IDH3B) from Macaca fascicularis (Crab-eating macaque).